Consider the following 502-residue polypeptide: Cysteine--tRNA ligase (502 aa).

Residue Cys30 coordinates Zn(2+). A 'HIGH' region motif is present at residues 32 to 42 (PTIYDYAHIGN). Zn(2+) is bound by residues Cys224, His263, and Glu267. The short motif at 296–300 (KMSKS) is the 'KMSKS' region element. Lys299 is an ATP binding site.

The protein belongs to the class-I aminoacyl-tRNA synthetase family. As to quaternary structure, monomer. Zn(2+) serves as cofactor.

It localises to the cytoplasm. The enzyme catalyses tRNA(Cys) + L-cysteine + ATP = L-cysteinyl-tRNA(Cys) + AMP + diphosphate. In Bartonella quintana (strain Toulouse) (Rochalimaea quintana), this protein is Cysteine--tRNA ligase.